The following is a 314-amino-acid chain: F-box protein AUF2 (314 aa).

Residues 1 to 49 enclose the F-box domain; the sequence is MDVFDGLPDPIIVDILNKVGDVKTLLRCSSLSKRFNSLVPQSESLTLRL.

As to quaternary structure, part of a SCF (ASK-cullin-F-box) protein ligase complex.

Its subcellular location is the nucleus. It functions in the pathway protein modification; protein ubiquitination. Functionally, component of SCF(ASK-cullin-F-box) E3 ubiquitin ligase complexes, which may mediate the ubiquitination and subsequent proteasomal degradation of target proteins. In Arabidopsis thaliana (Mouse-ear cress), this protein is F-box protein AUF2.